A 387-amino-acid chain; its full sequence is Succinate--CoA ligase [ADP-forming] subunit beta (387 aa).

The ATP-grasp domain maps to 9 to 236 (KELFAKHNVP…KDATDPLELK (228 aa)). Residues lysine 45, 52–54 (GRG), serine 94, and glutamate 99 contribute to the ATP site. Mg(2+) is bound by residues asparagine 191 and aspartate 205. Substrate-binding positions include asparagine 256 and 318–320 (GIT).

It belongs to the succinate/malate CoA ligase beta subunit family. As to quaternary structure, heterotetramer of two alpha and two beta subunits. The cofactor is Mg(2+).

It catalyses the reaction succinate + ATP + CoA = succinyl-CoA + ADP + phosphate. It carries out the reaction GTP + succinate + CoA = succinyl-CoA + GDP + phosphate. It participates in carbohydrate metabolism; tricarboxylic acid cycle; succinate from succinyl-CoA (ligase route): step 1/1. In terms of biological role, succinyl-CoA synthetase functions in the citric acid cycle (TCA), coupling the hydrolysis of succinyl-CoA to the synthesis of either ATP or GTP and thus represents the only step of substrate-level phosphorylation in the TCA. The beta subunit provides nucleotide specificity of the enzyme and binds the substrate succinate, while the binding sites for coenzyme A and phosphate are found in the alpha subunit. The chain is Succinate--CoA ligase [ADP-forming] subunit beta from Mycolicibacterium vanbaalenii (strain DSM 7251 / JCM 13017 / BCRC 16820 / KCTC 9966 / NRRL B-24157 / PYR-1) (Mycobacterium vanbaalenii).